Reading from the N-terminus, the 168-residue chain is uncharacterized protein (168 aa).

A disordered region spans residues 1-52 (MVLGLASFPESLSSQSETATQPRRPSVKWDLGSDYRKGTEETTASGSNFRRE). Polar residues predominate over residues 10–23 (ESLSSQSETATQPR). Residues 31-40 (LGSDYRKGTE) show a composition bias toward basic and acidic residues.

This is an uncharacterized protein from Mus musculus (Mouse).